Here is a 103-residue protein sequence, read N- to C-terminus: Large ribosomal subunit protein uL24 (103 aa).

It belongs to the universal ribosomal protein uL24 family. Part of the 50S ribosomal subunit.

Functionally, one of two assembly initiator proteins, it binds directly to the 5'-end of the 23S rRNA, where it nucleates assembly of the 50S subunit. Its function is as follows. One of the proteins that surrounds the polypeptide exit tunnel on the outside of the subunit. The polypeptide is Large ribosomal subunit protein uL24 (Anoxybacillus flavithermus (strain DSM 21510 / WK1)).